The sequence spans 947 residues: MQIDMNKLTPMMKQYLEVKNRYKDCILFFRLGDFYEMFFEDALVASKALEIALTGKACGLEERAPMCGVPFHSANSYISKLVENGYKVAIGEQMEDPSTAKGIVRREVIRVITPGTVLDGNLLENKKNNYLLSLYKDGTNIGLTYVDISTGETNATCLNEDKVIEEIAKIHPTEIIINDLDFIEKLRDIATVSNIYINESFSDNYLDINILKEYFPDVYLQKLKFDDKGLIKSSLSILLNYIYNTQKQITSNINNINIYNSSEYMVLDMFTRTNLELTQTIRGNKKKGSLLHVLDKTSTAMGGRLLRKYVEEPLINKSKIENRLDVIEEIKDDFILREDLNDILKNIYDIERICGKIAFERVTPKELIHLKNSIEKLPNLKDTINLSNAKILKEYVSEMDKLDDIYNLIDEAILEEPTITIKDGNIIKSDFSDELKELREISKNGAFLVKEIENREREKTGVKSLKIGFNKVFGYYIEITKANFKQAKLDETYIRKQTLSNAERYITPELKEIEEKILHAEEKIKSLEYEIFVEIRDTIYKNIDRIQKVAKTIANIDVFVSLATVAHINNYVKPAINENNKLDIRNGRHPVVENIVGEENFVPNDTYLNRGENIINIITGPNMSGKSTYMRQTAIIALMAHIGSFVPAESADIPILDRIFTRVGASDDLSQGQSTFMVEMNEVSLILKNATERSLVILDEIGRGTSTYDGISLAWSIVEYIQKNIRCKTLFATHYHELTDLEEEFKEVKNYSIAVKEDGEGIIFLRKIIPQGADKSYGIYVAKLAKLPDEVIERAKYILKDLEKNHVYNSVAINGDKENNNIINSNLDEELVKVNQSNFKNKYESLKIEHELIVKDYKHIKKDYDKLNSKFKALNDEVALMKQNDDKEKINQEDSVKEVALTQISFDSVNRDILSEEILNLDILNMTPLDAINSLYNLQRKAKEIKS.

620 to 627 is a binding site for ATP; the sequence is GPNMSGKS.

This sequence belongs to the DNA mismatch repair MutS family.

This protein is involved in the repair of mismatches in DNA. It is possible that it carries out the mismatch recognition step. This protein has a weak ATPase activity. The sequence is that of DNA mismatch repair protein MutS from Clostridioides difficile (strain 630) (Peptoclostridium difficile).